The chain runs to 349 residues: tRNA-specific 2-thiouridylase MnmA (349 aa).

ATP is bound by residues 6–13 and M32; that span reads LLSGGVDS. C103 serves as the catalytic Nucleophile. Residues C103 and C195 are joined by a disulfide bond. G127 contributes to the ATP binding site. Positions 145–147 are interaction with tRNA; the sequence is KDQ. The active-site Cysteine persulfide intermediate is the C195.

The protein belongs to the MnmA/TRMU family.

It localises to the cytoplasm. It carries out the reaction S-sulfanyl-L-cysteinyl-[protein] + uridine(34) in tRNA + AH2 + ATP = 2-thiouridine(34) in tRNA + L-cysteinyl-[protein] + A + AMP + diphosphate + H(+). In terms of biological role, catalyzes the 2-thiolation of uridine at the wobble position (U34) of tRNA, leading to the formation of s(2)U34. This is tRNA-specific 2-thiouridylase MnmA from Pseudothermotoga lettingae (strain ATCC BAA-301 / DSM 14385 / NBRC 107922 / TMO) (Thermotoga lettingae).